Here is a 500-residue protein sequence, read N- to C-terminus: NAD(P)H-quinone oxidoreductase chain 4, chloroplastic (500 aa).

15 helical membrane passes run 4 to 24 (FPWLTIIVVFPISAGSLMLFL), 35 to 55 (YTICICILELLLTTYAFCYNF), 87 to 107 (IGTILLTGFITTLATLAAFPV), 113 to 130 (LFHFLMLAMYSGQIGSFS), 134 to 154 (LLLFFIMWELELIPVYLLLAM), 167 to 187 (FILYTAGSSIFLLIGVLGISL), 211 to 231 (ILFYIGFLIAFAVKSPIIPLH), 242 to 262 (HYSTCMLLAGILLKMGAYGLV), 272 to 292 (AHSMFSPWLMVVGTIQIIYAA), 305 to 325 (IAYSSVSHMGFIIIGISSITD), 330 to 350 (GAILQIISHGFIGAALFFLAG), 364 to 384 (MGGMAISIPKIFTMFTILSMA), 386 to 406 (LALPGMSGFIAELIVFFGIIT), 411 to 431 (FLIFKILIIFVMAIGMILTPI), and 462 to 482 (LFLSISILIPIIGIGIYPDFV).

Belongs to the complex I subunit 4 family.

Its subcellular location is the plastid. The protein resides in the chloroplast thylakoid membrane. It carries out the reaction a plastoquinone + NADH + (n+1) H(+)(in) = a plastoquinol + NAD(+) + n H(+)(out). The enzyme catalyses a plastoquinone + NADPH + (n+1) H(+)(in) = a plastoquinol + NADP(+) + n H(+)(out). This is NAD(P)H-quinone oxidoreductase chain 4, chloroplastic from Capsella bursa-pastoris (Shepherd's purse).